The following is a 548-amino-acid chain: MAAAPQQSVHPSLPSSTSTLRLLISSSPRRPPPPPPRARRYNRLAASASAAREMPWPHVLTVAGSDSGGGAGIQADIKACAALGAYCSSVVTAVTAQNTAGVQGIHVVPEEFIREQLNSVLSDMSVDVVKTGMLPSIGVVRVLCESLKKFPVKALVVDPVMVSTSGDTLSESSTLSVYRDELFAMADIVTPNVKEASRLLGGVSLRTVSDMRNAAESIYKFGPKHVLVKGGDMLESSDATDVFFDGKEFIELHAHRIKTHNTHGTGCTLASCIASELAKGATMLHAVQVAKNFVESALHHSKDLVVGNGPQGPFDHLFKLKCPPYNVGSQPSFKPDQLFLYAVTDSGMNKKWGRSIKEAVQAAIEGGATIVQLREKDSETREFLEAAKACMEICKSSGVPLLINDRVDIALACNADGVHVGQLDMSAHEVRELLGPGKIIGVSCKTPAQAQQAWNDGADYIGCGGVFPTSTKANNPTLGFDGLKTVCLASKLPVVAIGGINASNAGSVMELGLPNLKGVAVVSALFDRPSVVAETRNMKSILTNTSRT.

Over residues 1–10 the composition is skewed to polar residues; sequence MAAAPQQSVH. The segment at 1–40 is disordered; sequence MAAAPQQSVHPSLPSSTSTLRLLISSSPRRPPPPPPRARR. The N-terminal 47 residues, 1–47, are a transit peptide targeting the chloroplast; that stretch reads MAAAPQQSVHPSLPSSTSTLRLLISSSPRRPPPPPPRARRYNRLAAS. Over residues 11–28 the composition is skewed to low complexity; it reads PSLPSSTSTLRLLISSSP. Residues 372 to 376 and N404 contribute to the 4-amino-2-methyl-5-(diphosphooxymethyl)pyrimidine site; that span reads QLREK. Mg(2+)-binding residues include D405 and D424. Residue S443 participates in 4-amino-2-methyl-5-(diphosphooxymethyl)pyrimidine binding. 469 to 471 is a binding site for 2-[(2R,5Z)-2-carboxy-4-methylthiazol-5(2H)-ylidene]ethyl phosphate; sequence TST. K472 is a binding site for 4-amino-2-methyl-5-(diphosphooxymethyl)pyrimidine. 2-[(2R,5Z)-2-carboxy-4-methylthiazol-5(2H)-ylidene]ethyl phosphate is bound by residues G499 and 522–523; that span reads VS.

This sequence belongs to the thiamine-phosphate synthase family. The cofactor is Mg(2+).

It localises to the plastid. It is found in the chloroplast. It carries out the reaction 2-[(2R,5Z)-2-carboxy-4-methylthiazol-5(2H)-ylidene]ethyl phosphate + 4-amino-2-methyl-5-(diphosphooxymethyl)pyrimidine + 2 H(+) = thiamine phosphate + CO2 + diphosphate. It catalyses the reaction 2-(2-carboxy-4-methylthiazol-5-yl)ethyl phosphate + 4-amino-2-methyl-5-(diphosphooxymethyl)pyrimidine + 2 H(+) = thiamine phosphate + CO2 + diphosphate. The enzyme catalyses 4-methyl-5-(2-phosphooxyethyl)-thiazole + 4-amino-2-methyl-5-(diphosphooxymethyl)pyrimidine + H(+) = thiamine phosphate + diphosphate. The catalysed reaction is 4-amino-5-hydroxymethyl-2-methylpyrimidine + ATP = 4-amino-2-methyl-5-(phosphooxymethyl)pyrimidine + ADP + H(+). The protein operates within cofactor biosynthesis; thiamine diphosphate biosynthesis; thiamine phosphate from 4-amino-2-methyl-5-diphosphomethylpyrimidine and 4-methyl-5-(2-phosphoethyl)-thiazole: step 1/1. Its pathway is cofactor biosynthesis; thiamine diphosphate biosynthesis; 4-amino-2-methyl-5-diphosphomethylpyrimidine from 5-amino-1-(5-phospho-D-ribosyl)imidazole: step 2/3. In terms of biological role, essential for thiamine biosynthesis. Bifunctional enzyme that catalyzes the phosphorylation of hydroxymethylpyrimidine phosphate (HMP-P) to HMP-PP and condenses 4-methyl-5-(beta-hydroxyethyl)thiazole monophosphate (THZ-P) and 2-methyl-4-amino-5-hydroxymethyl pyrimidine pyrophosphate (HMP-PP) to form thiamine monophosphate (TMP). The chain is Probable thiamine biosynthetic bifunctional enzyme, chloroplastic from Oryza sativa subsp. japonica (Rice).